Consider the following 200-residue polypeptide: UPF0316 protein SAUSA300_1892 (200 aa).

Helical transmembrane passes span 8–28 (PWLM…FLTM), 40–60 (IAAS…GLVM), and 66–86 (IQNI…GMKI).

This sequence belongs to the UPF0316 family.

The protein resides in the cell membrane. This chain is UPF0316 protein SAUSA300_1892, found in Staphylococcus aureus (strain USA300).